Consider the following 593-residue polypeptide: Cell surface glycoprotein (593 aa).

The signal sequence occupies residues 1-22; sequence MRKFTLLMLLLIVISMSGIAGA. N-linked (GalNAc...) asparagine glycans are attached at residues asparagine 29, asparagine 58, asparagine 66, asparagine 74, asparagine 114, asparagine 122, asparagine 145, asparagine 148, asparagine 158, asparagine 176, asparagine 208, asparagine 231, asparagine 326, asparagine 336, asparagine 340, asparagine 431, asparagine 471, asparagine 500, and asparagine 516.

N-glycosylated; contains glycans composed of methyl-Man, Man and GalNAc residues in a molar ratio of 2:3:1.

It is found in the secreted. It localises to the cell wall. The protein localises to the S-layer. The S-layer is a paracrystalline mono-layered assembly of proteins which coat the surface of the cell. This is Cell surface glycoprotein (slgA) from Methanothermus fervidus (strain ATCC 43054 / DSM 2088 / JCM 10308 / V24 S).